Here is a 352-residue protein sequence, read N- to C-terminus: Pyruvate dehydrogenase E1 component subunit beta, mitochondrial (352 aa).

Residues 1-21 constitute a mitochondrion transit peptide; sequence MALRKCGNLFVARLAGTSTRA. Residue Glu81 coordinates thiamine diphosphate. Residues Ile134, Ala182, Ile183, Asp185, and Asn187 each contribute to the K(+) site.

As to quaternary structure, tetramer of 2 alpha and 2 beta subunits. Requires thiamine diphosphate as cofactor.

The protein localises to the mitochondrion matrix. The catalysed reaction is N(6)-[(R)-lipoyl]-L-lysyl-[protein] + pyruvate + H(+) = N(6)-[(R)-S(8)-acetyldihydrolipoyl]-L-lysyl-[protein] + CO2. Functionally, the pyruvate dehydrogenase complex catalyzes the overall conversion of pyruvate to acetyl-CoA and CO(2). It contains multiple copies of three enzymatic components: pyruvate dehydrogenase (E1), dihydrolipoamide acetyltransferase (E2) and lipoamide dehydrogenase (E3). This is Pyruvate dehydrogenase E1 component subunit beta, mitochondrial (pdhb-1) from Caenorhabditis elegans.